The following is a 475-amino-acid chain: 3-isopropylmalate dehydratase large subunit (475 aa).

The [4Fe-4S] cluster site is built by C352, C413, and C416.

This sequence belongs to the aconitase/IPM isomerase family. LeuC type 1 subfamily. Heterodimer of LeuC and LeuD. [4Fe-4S] cluster is required as a cofactor.

It carries out the reaction (2R,3S)-3-isopropylmalate = (2S)-2-isopropylmalate. It participates in amino-acid biosynthesis; L-leucine biosynthesis; L-leucine from 3-methyl-2-oxobutanoate: step 2/4. In terms of biological role, catalyzes the isomerization between 2-isopropylmalate and 3-isopropylmalate, via the formation of 2-isopropylmaleate. The polypeptide is 3-isopropylmalate dehydratase large subunit (Pseudomonas syringae pv. tomato (strain ATCC BAA-871 / DC3000)).